The primary structure comprises 597 residues: MDHIRNFSIIAHIDHGKSTLADRIIQVCGGLADREMEAQVLDSMDIERERGITIKAQTAALSYRARDGKVYNLNLIDTPGHVDFSYEVSRSLSACEGALLVVDASQGVEAQTVANCYTAIELGVEVVPVLNKIDLPAANPENAIAEIEDVIGIDASDATRCSAKTGLGVEDVLEALIAKVPPPKGDPAAPLQALIIDSWFDNYVGVVMLVRIVNGTLRPKDKIKLMATGAQYPVEHIGVFTPKSRNLESLSAGQVGFIIAGIKELTAAKVGDTVTHATKAAAEPLPGFKEVKPQVFAGLYPVEANQYDALRESLEKLKLNDASLQYEPEVSQALGFGFRCGFLGLLHMEIVQERLEREFDMDLITTAPTVVYEVVQSDGSTIMVENPAKMPEPARIAEIREPIVTVNLYMPQDYVGSVITLCEQKRGSQINMQYHGRQVQLTYEIPMAEIVLDFFDRLKSVSRGYASMDYEFKEYRSSDVVKVDMLINGDKVDALSIIVHRSQSQYRGREVAAKMREIIPRQMYDVAIQAAIGAHIIARENIKALRKNVLAKCYGGDITRKKKLLEKQKEGKKRMKQVGSVEIPQEAFLAILRVEDK.

A tr-type G domain is found at 2–184; it reads DHIRNFSIIA…ALIAKVPPPK (183 aa). GTP is bound by residues 14–19 and 131–134; these read DHGKST and NKID.

The protein belongs to the TRAFAC class translation factor GTPase superfamily. Classic translation factor GTPase family. LepA subfamily.

It is found in the cell inner membrane. The enzyme catalyses GTP + H2O = GDP + phosphate + H(+). Required for accurate and efficient protein synthesis under certain stress conditions. May act as a fidelity factor of the translation reaction, by catalyzing a one-codon backward translocation of tRNAs on improperly translocated ribosomes. Back-translocation proceeds from a post-translocation (POST) complex to a pre-translocation (PRE) complex, thus giving elongation factor G a second chance to translocate the tRNAs correctly. Binds to ribosomes in a GTP-dependent manner. In Burkholderia multivorans (strain ATCC 17616 / 249), this protein is Elongation factor 4.